The sequence spans 114 residues: INGDAKGIVFFEQETSEAPVKVTGEVLGLAKGLHGFHVHEFGDNTNGCMSSGPHYNPRNKEHGAPTDENRHLGDLGNIQAAGDSPTAVSITDSKITLFGADSIIGRTVVVHADA.

3 residues coordinate Cu cation: H37, H39, and H54. A disordered region spans residues 49–73 (MSSGPHYNPRNKEHGAPTDENRHLG). Residues H54, H62, H71, and D74 each coordinate Zn(2+). Basic and acidic residues predominate over residues 58-73 (RNKEHGAPTDENRHLG). A Cu cation-binding site is contributed by H111.

Belongs to the Cu-Zn superoxide dismutase family. As to quaternary structure, homodimer. Cu cation serves as cofactor. Zn(2+) is required as a cofactor.

The protein localises to the cytoplasm. It catalyses the reaction 2 superoxide + 2 H(+) = H2O2 + O2. Destroys radicals which are normally produced within the cells and which are toxic to biological systems. This is Superoxide dismutase [Cu-Zn] from Drosophila madeirensis (Fruit fly).